Reading from the N-terminus, the 379-residue chain is 1-deoxy-D-xylulose 5-phosphate reductoisomerase (379 aa).

7 residues coordinate NADPH: T10, G11, S12, I13, R38, N39, and N121. K122 contributes to the 1-deoxy-D-xylulose 5-phosphate binding site. E123 serves as a coordination point for NADPH. D147 provides a ligand contact to Mn(2+). 1-deoxy-D-xylulose 5-phosphate contacts are provided by S148, E149, S173, and H196. E149 is a binding site for Mn(2+). G202 contacts NADPH. 1-deoxy-D-xylulose 5-phosphate contacts are provided by S209, N214, K215, and E218. A Mn(2+)-binding site is contributed by E218.

The protein belongs to the DXR family. Mg(2+) is required as a cofactor. The cofactor is Mn(2+).

The catalysed reaction is 2-C-methyl-D-erythritol 4-phosphate + NADP(+) = 1-deoxy-D-xylulose 5-phosphate + NADPH + H(+). It participates in isoprenoid biosynthesis; isopentenyl diphosphate biosynthesis via DXP pathway; isopentenyl diphosphate from 1-deoxy-D-xylulose 5-phosphate: step 1/6. In terms of biological role, catalyzes the NADPH-dependent rearrangement and reduction of 1-deoxy-D-xylulose-5-phosphate (DXP) to 2-C-methyl-D-erythritol 4-phosphate (MEP). The protein is 1-deoxy-D-xylulose 5-phosphate reductoisomerase of Chlamydia trachomatis serovar L2 (strain ATCC VR-902B / DSM 19102 / 434/Bu).